Here is a 436-residue protein sequence, read N- to C-terminus: Probable cinnamyl alcohol dehydrogenase 8B (436 aa).

Position 120 (C120) interacts with Zn(2+). T122 serves as a coordination point for NADP(+). 7 residues coordinate Zn(2+): H142, E143, C173, C176, C179, C187, and C236. NADP(+)-binding positions include T240, G261–G266, S284–K289, T324, G348, and N371–V373.

The protein belongs to the zinc-containing alcohol dehydrogenase family. Homodimer. Zn(2+) is required as a cofactor.

It catalyses the reaction (E)-cinnamyl alcohol + NADP(+) = (E)-cinnamaldehyde + NADPH + H(+). It carries out the reaction (E)-coniferol + NADP(+) = (E)-coniferaldehyde + NADPH + H(+). The catalysed reaction is (E)-sinapyl alcohol + NADP(+) = (E)-sinapaldehyde + NADPH + H(+). The enzyme catalyses (E)-4-coumaroyl alcohol + NADP(+) = (E)-4-coumaraldehyde + NADPH + H(+). It catalyses the reaction (E)-caffeyl alcohol + NADP(+) = (E)-caffeyl aldehyde + NADPH + H(+). Its pathway is aromatic compound metabolism; phenylpropanoid biosynthesis. Involved in lignin biosynthesis. Catalyzes the final step specific for the production of lignin monomers. Catalyzes the NADPH-dependent reduction of coniferaldehyde, 5-hydroxyconiferaldehyde, sinapaldehyde, 4-coumaraldehyde and caffeyl aldehyde to their respective alcohols. The chain is Probable cinnamyl alcohol dehydrogenase 8B from Oryza sativa subsp. japonica (Rice).